We begin with the raw amino-acid sequence, 493 residues long: tRNA-2-methylthio-N(6)-dimethylallyladenosine synthase (493 aa).

The span at 1–14 (MPMTGLLQTTLSTA) shows a compositional bias: polar residues. The interval 1–31 (MPMTGLLQTTLSTADQDRSGPAATTGDTPAR) is disordered. In terms of domain architecture, MTTase N-terminal spans 35-155 (KRLHVITWGC…LGGMVRRAMN (121 aa)). Positions 44, 80, 118, 199, 203, and 206 each coordinate [4Fe-4S] cluster. Residues 185-417 (LAGGRTAFLT…QALLRTQQEA (233 aa)) form the Radical SAM core domain. The TRAM domain occupies 420 to 482 (TACIGKTVNV…TNSLSATLPD (63 aa)).

This sequence belongs to the methylthiotransferase family. MiaB subfamily. As to quaternary structure, monomer. The cofactor is [4Fe-4S] cluster.

Its subcellular location is the cytoplasm. It carries out the reaction N(6)-dimethylallyladenosine(37) in tRNA + (sulfur carrier)-SH + AH2 + 2 S-adenosyl-L-methionine = 2-methylsulfanyl-N(6)-dimethylallyladenosine(37) in tRNA + (sulfur carrier)-H + 5'-deoxyadenosine + L-methionine + A + S-adenosyl-L-homocysteine + 2 H(+). Functionally, catalyzes the methylthiolation of N6-(dimethylallyl)adenosine (i(6)A), leading to the formation of 2-methylthio-N6-(dimethylallyl)adenosine (ms(2)i(6)A) at position 37 in tRNAs that read codons beginning with uridine. The sequence is that of tRNA-2-methylthio-N(6)-dimethylallyladenosine synthase from Granulibacter bethesdensis (strain ATCC BAA-1260 / CGDNIH1).